A 106-amino-acid polypeptide reads, in one-letter code: ATP-dependent Clp protease adapter protein ClpS (106 aa).

Belongs to the ClpS family. In terms of assembly, binds to the N-terminal domain of the chaperone ClpA.

Involved in the modulation of the specificity of the ClpAP-mediated ATP-dependent protein degradation. The protein is ATP-dependent Clp protease adapter protein ClpS of Citrobacter koseri (strain ATCC BAA-895 / CDC 4225-83 / SGSC4696).